Reading from the N-terminus, the 365-residue chain is UDP-N-acetylglucosamine--N-acetylmuramyl-(pentapeptide) pyrophosphoryl-undecaprenol N-acetylglucosamine transferase (365 aa).

UDP-N-acetyl-alpha-D-glucosamine is bound by residues 13-15 (TGG), Asn125, Arg165, Ser192, and Gln293.

The protein belongs to the glycosyltransferase 28 family. MurG subfamily.

Its subcellular location is the cell inner membrane. The enzyme catalyses di-trans,octa-cis-undecaprenyl diphospho-N-acetyl-alpha-D-muramoyl-L-alanyl-D-glutamyl-meso-2,6-diaminopimeloyl-D-alanyl-D-alanine + UDP-N-acetyl-alpha-D-glucosamine = di-trans,octa-cis-undecaprenyl diphospho-[N-acetyl-alpha-D-glucosaminyl-(1-&gt;4)]-N-acetyl-alpha-D-muramoyl-L-alanyl-D-glutamyl-meso-2,6-diaminopimeloyl-D-alanyl-D-alanine + UDP + H(+). It functions in the pathway cell wall biogenesis; peptidoglycan biosynthesis. Functionally, cell wall formation. Catalyzes the transfer of a GlcNAc subunit on undecaprenyl-pyrophosphoryl-MurNAc-pentapeptide (lipid intermediate I) to form undecaprenyl-pyrophosphoryl-MurNAc-(pentapeptide)GlcNAc (lipid intermediate II). This Ruegeria pomeroyi (strain ATCC 700808 / DSM 15171 / DSS-3) (Silicibacter pomeroyi) protein is UDP-N-acetylglucosamine--N-acetylmuramyl-(pentapeptide) pyrophosphoryl-undecaprenol N-acetylglucosamine transferase.